The sequence spans 164 residues: uncharacterized protein (164 aa).

Positions 1-18 are cleaved as a signal peptide; the sequence is MILILTIIVGFLIYFVTA. The N-linked (GlcNAc...) asparagine; by host glycan is linked to asparagine 88.

This sequence belongs to the IIV-6 357R family.

This is an uncharacterized protein from Acheta domesticus (House cricket).